Reading from the N-terminus, the 324-residue chain is Acetyl-coenzyme A carboxylase carboxyl transferase subunit alpha (324 aa).

Positions 37-291 constitute a CoA carboxyltransferase C-terminal domain; it reads KLDKRLDRLK…QEYVLQEWLK (255 aa).

Belongs to the AccA family. As to quaternary structure, acetyl-CoA carboxylase is a heterohexamer composed of biotin carboxyl carrier protein (AccB), biotin carboxylase (AccC) and two subunits each of ACCase subunit alpha (AccA) and ACCase subunit beta (AccD).

It localises to the cytoplasm. The catalysed reaction is N(6)-carboxybiotinyl-L-lysyl-[protein] + acetyl-CoA = N(6)-biotinyl-L-lysyl-[protein] + malonyl-CoA. It functions in the pathway lipid metabolism; malonyl-CoA biosynthesis; malonyl-CoA from acetyl-CoA: step 1/1. Its function is as follows. Component of the acetyl coenzyme A carboxylase (ACC) complex. First, biotin carboxylase catalyzes the carboxylation of biotin on its carrier protein (BCCP) and then the CO(2) group is transferred by the carboxyltransferase to acetyl-CoA to form malonyl-CoA. This chain is Acetyl-coenzyme A carboxylase carboxyl transferase subunit alpha, found in Chlamydia trachomatis serovar D (strain ATCC VR-885 / DSM 19411 / UW-3/Cx).